Consider the following 132-residue polypeptide: Small ribosomal subunit protein uS8 (132 aa).

It belongs to the universal ribosomal protein uS8 family. As to quaternary structure, part of the 30S ribosomal subunit. Contacts proteins S5 and S12.

Its function is as follows. One of the primary rRNA binding proteins, it binds directly to 16S rRNA central domain where it helps coordinate assembly of the platform of the 30S subunit. This chain is Small ribosomal subunit protein uS8, found in Geotalea daltonii (strain DSM 22248 / JCM 15807 / FRC-32) (Geobacter daltonii).